The primary structure comprises 324 residues: Muscleblind-like protein (324 aa).

C3H1-type zinc fingers lie at residues 38–66 (WLQV…HPPP) and 72–100 (QGRV…HPPQ).

It belongs to the muscleblind family. Expressed in neurons around the pharynx.

The protein localises to the nucleus. Its function is as follows. Binds to RNA with repeat sequences 5'-CUG-3' and 5'-CCUG-3'. In Caenorhabditis elegans, this protein is Muscleblind-like protein (mbl-1).